Here is a 269-residue protein sequence, read N- to C-terminus: dITP/XTP pyrophosphatase (269 aa).

Substrate is bound at residue Ser-22–Lys-27. Asp-82 acts as the Proton acceptor in catalysis. A Mg(2+)-binding site is contributed by Asp-82. Residues Ser-83, Phe-165–Asp-168, Lys-188, and His-193–Arg-194 contribute to the substrate site.

The protein belongs to the HAM1 NTPase family. As to quaternary structure, homodimer. Mg(2+) is required as a cofactor.

It carries out the reaction XTP + H2O = XMP + diphosphate + H(+). The catalysed reaction is dITP + H2O = dIMP + diphosphate + H(+). It catalyses the reaction ITP + H2O = IMP + diphosphate + H(+). Functionally, pyrophosphatase that catalyzes the hydrolysis of nucleoside triphosphates to their monophosphate derivatives, with a high preference for the non-canonical purine nucleotides XTP (xanthosine triphosphate), dITP (deoxyinosine triphosphate) and ITP. Seems to function as a house-cleaning enzyme that removes non-canonical purine nucleotides from the nucleotide pool, thus preventing their incorporation into DNA/RNA and avoiding chromosomal lesions. In Treponema pallidum (strain Nichols), this protein is dITP/XTP pyrophosphatase.